The following is a 180-amino-acid chain: Large ribosomal subunit protein uL6 (180 aa).

It belongs to the universal ribosomal protein uL6 family. In terms of assembly, part of the 50S ribosomal subunit.

Its function is as follows. This protein binds to the 23S rRNA, and is important in its secondary structure. It is located near the subunit interface in the base of the L7/L12 stalk, and near the tRNA binding site of the peptidyltransferase center. This chain is Large ribosomal subunit protein uL6, found in Clostridium kluyveri (strain NBRC 12016).